The primary structure comprises 267 residues: UPF0173 metal-dependent hydrolase THEYE_A0282 (267 aa).

This sequence belongs to the UPF0173 family.

The polypeptide is UPF0173 metal-dependent hydrolase THEYE_A0282 (Thermodesulfovibrio yellowstonii (strain ATCC 51303 / DSM 11347 / YP87)).